The following is a 118-amino-acid chain: UPF0134 protein MPN_287 (118 aa).

This sequence belongs to the UPF0134 family.

In Mycoplasma pneumoniae (strain ATCC 29342 / M129 / Subtype 1) (Mycoplasmoides pneumoniae), this protein is UPF0134 protein MPN_287.